Reading from the N-terminus, the 536-residue chain is Suppressor of cytokine signaling 5 (536 aa).

The segment at 1–50 is required for interaction with IL4R; the sequence is MDKVGKMWNNFKYRCQNLFGHEGGSRSENVDMNSNRCLSVKEKNISIGDS. A disordered region spans residues 115–175; the sequence is SRHAPWGGKK…SVSSRTVGSR (61 aa). Residues 158 to 169 are compositionally biased toward low complexity; it reads VSSVHDMDSVSS. Residues 381–476 form the SH2 domain; that stretch reads CYWGVMDRYE…FFEPLLTISL (96 aa). The SOCS box domain maps to 471 to 520; that stretch reads LLTISLNRTFPFSLQYICRAVICRCTTYDGIDGLPLPSMLQDFLKEYHYK.

In terms of assembly, interacts with IL4R; inhibits IL4 signaling. Interacts with EGFR. Interacts with ELOB and ELOC; mediates EGFR ubiquitination and degradation. Phosphorylated. Phosphorylation is induced by EGF.

Its pathway is protein modification; protein ubiquitination. SOCS family proteins form part of a classical negative feedback system that regulates cytokine signal transduction. May be a substrate-recognition component of a SCF-like ECS (Elongin BC-CUL2/5-SOCS-box protein) E3 ubiquitin-protein ligase complex which mediates the ubiquitination and subsequent proteasomal degradation of target proteins. Inhibits for instance EGF signaling by mediating the degradation of the EGF receptor/EGFR. Involved in the regulation of T-helper cell differentiation by inhibiting of the IL4 signaling pathway which promotes differentiation into the Th2 phenotype. Can also partially inhibit IL6 and LIF signaling. The sequence is that of Suppressor of cytokine signaling 5 (SOCS5) from Homo sapiens (Human).